Reading from the N-terminus, the 305-residue chain is Sodium/potassium-transporting ATPase subunit beta-1 (305 aa).

The Cytoplasmic segment spans residues 1–32 (MAREKSTDDGGGWKKFLWDSEKKQVLGRTGTS). A helical; Signal-anchor for type II membrane protein transmembrane segment spans residues 33 to 53 (WFKIFVFYLIFYGCLAGIFIG). The Extracellular portion of the chain corresponds to 54–305 (TIQVMLLTIS…RFEVKIEVKS (252 aa)). The N-linked (GlcNAc...) asparagine glycan is linked to asparagine 114. Cysteine 127 and cysteine 150 form a disulfide bridge. N-linked (GlcNAc...) asparagine glycosylation is present at asparagine 159. Cysteines 160 and 176 form a disulfide. Asparagine 194 and asparagine 267 each carry an N-linked (GlcNAc...) asparagine glycan. Cysteine 215 and cysteine 278 are oxidised to a cystine.

The protein belongs to the X(+)/potassium ATPases subunit beta family. In terms of assembly, the sodium/potassium-transporting ATPase is composed of a catalytic alpha subunit, an auxiliary non-catalytic beta subunit and an additional regulatory subunit.

It localises to the cell membrane. Its function is as follows. This is the non-catalytic component of the active enzyme, which catalyzes the hydrolysis of ATP coupled with the exchange of Na(+) and K(+) ions across the plasma membrane. The beta subunit regulates, through assembly of alpha/beta heterodimers, the number of sodium pumps transported to the plasma membrane. This chain is Sodium/potassium-transporting ATPase subunit beta-1 (atp1b1), found in Tetronarce californica (Pacific electric ray).